The sequence spans 94 residues: MIKSELVQIIASRNPHLFQRDVENIVGAVFDEITNALAEGNRVELRGFGAFSVKNRPARSGRNPRTGETVDVEEKWVPFFKTGKKLRDRLNGAV.

It belongs to the bacterial histone-like protein family. As to quaternary structure, heterodimer of an alpha and a beta chain.

In terms of biological role, this protein is one of the two subunits of integration host factor, a specific DNA-binding protein that functions in genetic recombination as well as in transcriptional and translational control. In Brucella abortus (strain S19), this protein is Integration host factor subunit beta.